Here is a 242-residue protein sequence, read N- to C-terminus: Probable transcriptional regulatory protein NGK_1508 (242 aa).

This sequence belongs to the TACO1 family.

The protein localises to the cytoplasm. The sequence is that of Probable transcriptional regulatory protein NGK_1508 from Neisseria gonorrhoeae (strain NCCP11945).